Here is a 422-residue protein sequence, read N- to C-terminus: 5'-deoxyadenosine deaminase (422 aa).

Positions 57 and 59 each coordinate Zn(2+). 2 residues coordinate substrate: Glu86 and His178. Position 205 (His205) interacts with Zn(2+). Residues Glu208 and Asp294 each coordinate substrate. Asp294 serves as a coordination point for Zn(2+).

This sequence belongs to the metallo-dependent hydrolases superfamily. MTA/SAH deaminase family. In terms of assembly, homotetramer. Zn(2+) serves as cofactor.

It catalyses the reaction 5'-deoxyadenosine + H2O + H(+) = 5'-deoxyinosine + NH4(+). The catalysed reaction is S-adenosyl-L-homocysteine + H2O + H(+) = S-inosyl-L-homocysteine + NH4(+). It carries out the reaction S-methyl-5'-thioadenosine + H2O + H(+) = S-methyl-5'-thioinosine + NH4(+). The enzyme catalyses adenosine + H2O + H(+) = inosine + NH4(+). It participates in amino-acid biosynthesis; S-adenosyl-L-methionine biosynthesis. In terms of biological role, catalyzes the deamination of three SAM-derived enzymatic products, namely 5'-deoxyadenosine, S-adenosyl-L-homocysteine, and 5'-methylthioadenosine, to produce the inosine analogs. Can also deaminate adenosine. The preferred substrate for this enzyme is 5'-deoxyadenosine, but all these substrates are efficiently deaminated. Likely functions in a S-adenosyl-L-methionine (SAM) recycling pathway from S-adenosyl-L-homocysteine (SAH) produced from SAM-dependent methylation reactions. May also be involved in the recycling of 5'-deoxyadenosine, whereupon the 5'-deoxyribose moiety of 5'-deoxyinosine is further metabolized to deoxyhexoses used for the biosynthesis of aromatic amino acids in methanogens. This chain is 5'-deoxyadenosine deaminase, found in Methanococcus vannielii (strain ATCC 35089 / DSM 1224 / JCM 13029 / OCM 148 / SB).